Here is a 1220-residue protein sequence, read N- to C-terminus: Pesticidal crystal protein Cry5Ac (1220 aa).

The segment at 1194 to 1220 (PLPTDDQNSEGNTAFSTNSDTSMNNNQ) is disordered. The span at 1198–1220 (DDQNSEGNTAFSTNSDTSMNNNQ) shows a compositional bias: polar residues.

Belongs to the delta endotoxin family.

In terms of biological role, promotes colloidosmotic lysis by binding to the midgut epithelial cells of hymenopteran species. The chain is Pesticidal crystal protein Cry5Ac (cry5Ac) from Bacillus thuringiensis.